The sequence spans 550 residues: Hydroxylamine reductase (550 aa).

[4Fe-4S] cluster contacts are provided by Cys7, Cys10, Cys19, and Cys25. Positions 244, 268, 312, 405, 433, 458, 493, and 495 each coordinate hybrid [4Fe-2O-2S] cluster. Cys405 carries the post-translational modification Cysteine persulfide.

This sequence belongs to the HCP family. It depends on [4Fe-4S] cluster as a cofactor. The cofactor is hybrid [4Fe-2O-2S] cluster.

The protein resides in the cytoplasm. It carries out the reaction A + NH4(+) + H2O = hydroxylamine + AH2 + H(+). Catalyzes the reduction of hydroxylamine to form NH(3) and H(2)O. In Porphyromonas gingivalis (strain ATCC 33277 / DSM 20709 / CIP 103683 / JCM 12257 / NCTC 11834 / 2561), this protein is Hydroxylamine reductase.